The following is a 221-amino-acid chain: MAYRDQSLGELAIAIPRATKLFRELNLDFCCGGKQTLSRAAGKKDLNIDELEAQLEKLAAQPSDARDWREAPLADIIAYIIPRFHDRHREQLPELILMAKKVERVHHDKADCPHGLANQLTAIYNELSQHMMKEERILFPMIGQGMGANAAAPISVMEHEHDDAGRDVEVVKELTNGVVPPEGACNTWRALYSGINEFITDLMEHIHLENNLLFPRALRGE.

Belongs to the RIC family. YtfE subfamily. In terms of assembly, homodimer.

The protein localises to the cytoplasm. Its function is as follows. Di-iron-containing protein involved in the repair of iron-sulfur clusters damaged by oxidative and nitrosative stress conditions. In Pectobacterium atrosepticum (strain SCRI 1043 / ATCC BAA-672) (Erwinia carotovora subsp. atroseptica), this protein is Iron-sulfur cluster repair protein YtfE.